A 354-amino-acid chain; its full sequence is Polyribonucleotide 5'-hydroxyl-kinase PYRAB01840 (354 aa).

An ATP-binding site is contributed by 36–43; that stretch reads GDVDTGKT.

It depends on a divalent metal cation as a cofactor.

It carries out the reaction a 5'-end dephospho-2'-deoxyribonucleoside-DNA + ATP = a 5'-end 5'-phospho-2'-deoxyribonucleoside-DNA + ADP + H(+). The catalysed reaction is a 5'-end dephospho-ribonucleoside-RNA + ATP = a 5'-end 5'-phospho-ribonucleoside-RNA + ADP + H(+). Functionally, polynucleotide kinase that can phosphorylate the 5'-hydroxyl groups of both single-stranded RNA (ssRNA) and single-stranded DNA (ssDNA). Exhibits a strong preference for ssRNA. The sequence is that of Polyribonucleotide 5'-hydroxyl-kinase PYRAB01840 from Pyrococcus abyssi (strain GE5 / Orsay).